The following is a 302-amino-acid chain: Tyrosine recombinase XerC (302 aa).

The region spanning 2–89 (QPLMEQIRAF…AIRSFYRHLL (88 aa)) is the Core-binding (CB) domain. A Tyr recombinase domain is found at 110–289 (RLPFHLDIDQ…SLDRLMEVYD (180 aa)). Residues arginine 150, lysine 174, histidine 241, arginine 244, and histidine 267 contribute to the active site. Catalysis depends on tyrosine 276, which acts as the O-(3'-phospho-DNA)-tyrosine intermediate.

The protein belongs to the 'phage' integrase family. XerC subfamily. Forms a cyclic heterotetrameric complex composed of two molecules of XerC and two molecules of XerD.

The protein localises to the cytoplasm. Functionally, site-specific tyrosine recombinase, which acts by catalyzing the cutting and rejoining of the recombining DNA molecules. The XerC-XerD complex is essential to convert dimers of the bacterial chromosome into monomers to permit their segregation at cell division. It also contributes to the segregational stability of plasmids. In Pelobacter propionicus (strain DSM 2379 / NBRC 103807 / OttBd1), this protein is Tyrosine recombinase XerC.